The primary structure comprises 505 residues: Bile acid-sensitive ion channel (505 aa).

Residues 1 to 30 are binds the plasma membrane and stabilizes the channel in the closed state; the sequence is MEQTEKSKVYAENGLLEKIKLCLSKKPLPS. Over 1 to 61 the chain is Cytoplasmic; sequence MEQTEKSKVY…NIVQNRSKIR (61 aa). The chain crosses the membrane as a helical span at residues 62-82; sequence RVLWLVVVLGSVSLVTWQIYI. Over 83–459 the chain is Extracellular; it reads RLLNYFTWPT…GLFCGASLIT (377 aa). Intrachain disulfides connect Cys112-Cys207, Cys185-Cys192, Cys298-Cys377, Cys315-Cys373, Cys328-Cys350, and Cys330-Cys342. Asn147, Asn163, Asn178, and Asn179 each carry an N-linked (GlcNAc...) asparagine glycan. The N-linked (GlcNAc...) asparagine glycan is linked to Asn306. Residues Asn370, Asn405, and Asn421 are each glycosylated (N-linked (GlcNAc...) asparagine). Residues 454 to 456 carry the GAS motif; ion selectivity filter motif; the sequence is GAS. A helical transmembrane segment spans residues 460 to 480; sequence IIEIIEYLFTNFYWICIFFLL. At 481-505 the chain is on the cytoplasmic side; it reads KISEMTQWTPPPQNHLGNKNRIEEC.

The protein belongs to the amiloride-sensitive sodium channel (TC 1.A.6) family. ASIC5 subfamily. Forms homotrimeric channels. Detected in small intestine, duodenum and jejunum. Detected at very low levels in testis and rectum.

Its subcellular location is the apical cell membrane. The protein localises to the cell membrane. It catalyses the reaction Na(+)(in) = Na(+)(out). The enzyme catalyses Li(+)(in) = Li(+)(out). It carries out the reaction K(+)(in) = K(+)(out). The catalysed reaction is H(+)(in) = H(+)(out). Inhibited by the diuretic drug amiloride. Forms bile acid-gated sodium channels and may play a role in bile acid-dependent absorption and secretion by epithelial cells of the bile ducts. Displays high selectivity for sodium ions but can also permit the permeation of other cations. The gating could be indirect and the consequence of alterations of the membrane environment of the channel by bile acids. As a sodium channel of type II unipolar brush cells of the vestibulocerebellum, controlling the electrical activity of these cells, could play a role in motor coordination and balance. This chain is Bile acid-sensitive ion channel, found in Homo sapiens (Human).